Reading from the N-terminus, the 120-residue chain is Phosphoribosyl-AMP cyclohydrolase (120 aa).

Aspartate 75 is a Mg(2+) binding site. Cysteine 76 serves as a coordination point for Zn(2+). The Mg(2+) site is built by aspartate 77 and aspartate 79. The Zn(2+) site is built by cysteine 92 and cysteine 99.

It belongs to the PRA-CH family. As to quaternary structure, homodimer. Mg(2+) serves as cofactor. It depends on Zn(2+) as a cofactor.

The protein localises to the cytoplasm. It carries out the reaction 1-(5-phospho-beta-D-ribosyl)-5'-AMP + H2O = 1-(5-phospho-beta-D-ribosyl)-5-[(5-phospho-beta-D-ribosylamino)methylideneamino]imidazole-4-carboxamide. It functions in the pathway amino-acid biosynthesis; L-histidine biosynthesis; L-histidine from 5-phospho-alpha-D-ribose 1-diphosphate: step 3/9. In terms of biological role, catalyzes the hydrolysis of the adenine ring of phosphoribosyl-AMP. The protein is Phosphoribosyl-AMP cyclohydrolase of Haloarcula marismortui (strain ATCC 43049 / DSM 3752 / JCM 8966 / VKM B-1809) (Halobacterium marismortui).